The primary structure comprises 51 residues: uncharacterized protein (51 aa).

This is an uncharacterized protein from Thermoproteus tenax virus 1 (strain KRA1) (TTV1).